A 334-amino-acid chain; its full sequence is Serine/threonine-protein kinase SAPK3 (334 aa).

The Protein kinase domain maps to 5 to 261 (YEALKELGAG…IPEIKKHTWF (257 aa)). ATP contacts are provided by residues 11-19 (LGAGNFGVA) and K34. D124 functions as the Proton acceptor in the catalytic mechanism.

This sequence belongs to the protein kinase superfamily. Ser/Thr protein kinase family. Autophosphorylated in presence of Ca(2+). In terms of tissue distribution, expressed in leaves and maturing seeds, but not in roots and stems of field-grown plants.

It localises to the cytoplasm. Its subcellular location is the nucleus. It catalyses the reaction L-seryl-[protein] + ATP = O-phospho-L-seryl-[protein] + ADP + H(+). The enzyme catalyses L-threonyl-[protein] + ATP = O-phospho-L-threonyl-[protein] + ADP + H(+). With respect to regulation, activated by phosphorylation. May play a role in signal transduction of hyperosmotic response. This is Serine/threonine-protein kinase SAPK3 (SAPK3) from Oryza sativa subsp. indica (Rice).